We begin with the raw amino-acid sequence, 601 residues long: Membrane protein insertase YidC (601 aa).

Residues isoleucine 10–proline 30 form a helical membrane-spanning segment. The segment at alanine 34–proline 63 is disordered. The span at alanine 39–alanine 53 shows a compositional bias: low complexity. Positions proline 54–proline 63 are enriched in pro residues. Helical transmembrane passes span phenylalanine 382–valine 404, leucine 455–isoleucine 475, alanine 510–glycine 530, and phenylalanine 549–tyrosine 569.

Belongs to the OXA1/ALB3/YidC family. Type 1 subfamily. As to quaternary structure, interacts with the Sec translocase complex via SecD. Specifically interacts with transmembrane segments of nascent integral membrane proteins during membrane integration.

The protein resides in the cell inner membrane. Functionally, required for the insertion and/or proper folding and/or complex formation of integral membrane proteins into the membrane. Involved in integration of membrane proteins that insert both dependently and independently of the Sec translocase complex, as well as at least some lipoproteins. Aids folding of multispanning membrane proteins. The chain is Membrane protein insertase YidC from Acidiphilium cryptum (strain JF-5).